The sequence spans 437 residues: Transcription factor TGAL5 (437 aa).

Residues 33–75 are disordered; that stretch reads QEPYSNSQSVGSTTDSSSAQNTMSQAELVSPASMRSDSGQEQQ. The span at 37 to 50 shows a compositional bias: low complexity; it reads SNSQSVGSTTDSSS. Residues 51 to 75 show a composition bias toward polar residues; it reads AQNTMSQAELVSPASMRSDSGQEQQ. Positions 126 to 170 constitute a bZIP domain; that stretch reads DAKTERRLAQNREAARKSRLRKKAYVQQLETSRIRLQQIEQELQR. A basic motif region spans residues 128 to 148; the sequence is KTERRLAQNREAARKSRLRKK. A leucine-zipper region spans residues 154 to 168; sequence LETSRIRLQQIEQEL. The DOG1 domain maps to 191–405; it reads AVMFDMDYTR…RALSSLWASR (215 aa).

Belongs to the bZIP family. As to quaternary structure, interacts with NPR5/NH4, NH5.1 and NH5.2.

It localises to the nucleus. Transcriptional regulator involved in defense response. The sequence is that of Transcription factor TGAL5 from Oryza sativa subsp. japonica (Rice).